A 157-amino-acid chain; its full sequence is Protein-export protein SecB (157 aa).

This sequence belongs to the SecB family. In terms of assembly, homotetramer, a dimer of dimers. One homotetramer interacts with 1 SecA dimer.

It is found in the cytoplasm. Functionally, one of the proteins required for the normal export of preproteins out of the cell cytoplasm. It is a molecular chaperone that binds to a subset of precursor proteins, maintaining them in a translocation-competent state. It also specifically binds to its receptor SecA. The polypeptide is Protein-export protein SecB (Proteus mirabilis (strain HI4320)).